A 216-amino-acid polypeptide reads, in one-letter code: Chaperone protein TorD (216 aa).

This sequence belongs to the TorD/DmsD family. TorD subfamily.

Its subcellular location is the cytoplasm. Involved in the biogenesis of TorA. Acts on TorA before the insertion of the molybdenum cofactor and, as a result, probably favors a conformation of the apoenzyme that is competent for acquiring the cofactor. The polypeptide is Chaperone protein TorD (Photobacterium profundum (strain SS9)).